The chain runs to 599 residues: MFNKFNTKPLWEVSKTLSSVAQGFEPADMVIINSRLINVCTREVIENTDVAVSCGRIALVGDAKHCIGENTEVIDAKGQYIAPGFLDGHIHVESSMLSVSEYARSVVPHGTVGIYMDPHEICNVLGLNGVRYMIEDGKGTPLKNMVTTPSCVPAVPGFEDTGAAVGPEDVRETMKWDEIVGLGEMMNFPGILYSTDHAHGVVGETLKASKTVTGHYSLPETGKGLNGYIASGVRCCHESTRAEDALAKMRLGMYAMFREGSAWHDLKEVSKAITENKVDSRFAVLISDDTHPHTLLKDGHLDHIIKRAIEEGIEPLTAIQMVTINCAQCFQMDHELGSITPGKCADIVFIEDLKDVKITKVIIDGNLVAKGGLLTTSIAKYDYPEDAMNSMHIKNKITPDSFNIMAPNKEKITARVIEIIPERVGTYERHIELKVKDDKVQCDPNKDVLKAVVFERHHETGKAGYGFVKGFGIKRGAMAATVAHDAHNLLVIGTNDEDMALAANTLIECGGGMVAVQDGKVLGLVPLPIAGLMSNKPLEEMAEMVEKLDSAWKEIGCDIVSPFMTMALIPLACLPELRLTNRGLVDCNKFEFVSLFVEE.

Belongs to the metallo-dependent hydrolases superfamily. Adenine deaminase family. Mn(2+) is required as a cofactor.

The catalysed reaction is adenine + H2O + H(+) = hypoxanthine + NH4(+). This chain is Adenine deaminase, found in Clostridium botulinum (strain Langeland / NCTC 10281 / Type F).